We begin with the raw amino-acid sequence, 156 residues long: Myosin regulatory light chain B, smooth adductor muscle (156 aa).

Residue Ala1 is modified to Blocked amino end (Ala). 2 EF-hand domains span residues 15-50 (KQIQEMKEAFTMIDQNRDGFIDINDLKEMFSSLGRT) and 84-119 (DTEETLRNAFAMFDELDTKKLNIEYIKDLLENMGDN). Residues Asp28, Asn30, Asp32, and Asp39 each contribute to the Ca(2+) site.

In terms of biological role, in molluscan muscle, calcium regulation is associated with myosin rather than with actin. Muscle myosin contains two types of light chains: the catalytic light chain, essential for ATPase activity, and the regulatory light chain, a calcium-binding protein responsible for Ca(2+) dependent binding and Ca(2+) dependent Mg-ATPase activity. The polypeptide is Myosin regulatory light chain B, smooth adductor muscle (Mizuhopecten yessoensis (Japanese scallop)).